The primary structure comprises 237 residues: MHLLIPAAGMGRRMGSDRNKLRLMLHGKPLLAWTLLAAESSISISWIGIIGQLEDEPTWETLLNTLSLNKPVVFIEGGQTRQESVYNGLQALPPEAEQVLIHDGARCLATPELLDRCAHALHKYQGFVAAVPVKDTIKVVDTTHQIQGTPDRSQLWAAQTPQGFQVVPLKKCHEQGRQQGWEVTDDAALFEKLDLPVHIVVGEETNLKVTTPADLAIAELILEQRLQKNSQTDGFGS.

It belongs to the IspD/TarI cytidylyltransferase family. IspD subfamily.

It catalyses the reaction 2-C-methyl-D-erythritol 4-phosphate + CTP + H(+) = 4-CDP-2-C-methyl-D-erythritol + diphosphate. It functions in the pathway isoprenoid biosynthesis; isopentenyl diphosphate biosynthesis via DXP pathway; isopentenyl diphosphate from 1-deoxy-D-xylulose 5-phosphate: step 2/6. Catalyzes the formation of 4-diphosphocytidyl-2-C-methyl-D-erythritol from CTP and 2-C-methyl-D-erythritol 4-phosphate (MEP). The protein is 2-C-methyl-D-erythritol 4-phosphate cytidylyltransferase of Acaryochloris marina (strain MBIC 11017).